A 438-amino-acid polypeptide reads, in one-letter code: Alkylcitrate synthase tstJ (438 aa).

Residues H309 and D365 contribute to the active site.

This sequence belongs to the citrate synthase family.

The enzyme catalyses (2E,10E)-dode-2,10-dicenoyl-CoA + oxaloacetate + H2O = (4E,11E)-2-hydroxytrideca-4,11-dien-1,2,3-tricarboxylate + CoA + H(+). The protein operates within secondary metabolite biosynthesis. Alkylcitrate synthase; part of the gene cluster that mediates the biosynthesis of the antihypercholesterolemic agents phomoidrides which are dimeric anhydrides. Within the pathway, the alkylcitrate synthase (ACS) tstJ and the alkylcitrate dehydratase (ACDH) tstI produce the decarboxylated monomeric anhydrides by coupling the C12-fatty acyl product from phiA with oxalacetic acid. The pathway begins with the highly reducing polyketide synthase tstA that catalyzes the formation of a C12-fatty acyl-ACP, starting from one acetate and 5 malonate units. The hydrolase tstM is involved in the release of the C12-fatty acyl chain from phiA. The alkylcitrate synthase (ACS) tstJ and the alkylcitrate dehydratase (ACDH) tstI then give rise to decarboxylated monomeric anhydrides by coupling the C12-fatty acyl chain with oxalacetic acid. The cyclase tstC is responsible for the dimerization of the monomeric anhydrides which leads to the production of prephomoidride that contains the characteristic bicyclo[4.3.1]deca-1,6-diene system of phomoidrides. Iterative oxidation catalyzed by the alpha-ketoglutarate-dependent dioxygenase tstK produced then phomoidride A. Finally, the methyltransferase tstE converts phomoidride A to phomoidride B via an acetalization reaction. The phosphatidylethanolamine-binding protein tstB and tstN are not essential for dimerization and their functions have still to be determined. The polypeptide is Alkylcitrate synthase tstJ (Talaromyces stipitatus (strain ATCC 10500 / CBS 375.48 / QM 6759 / NRRL 1006) (Penicillium stipitatum)).